Reading from the N-terminus, the 494-residue chain is Solute carrier family 2, facilitated glucose transporter member 3 (494 aa).

At 1–10 (MGTTKVTPYL) the chain is on the cytoplasmic side. A helical transmembrane segment spans residues 11-32 (IFATSVAAIGSFQFGYNTGVIN). The Extracellular portion of the chain corresponds to 33–64 (APEMIIRDFLNYTLDEKLDEPPSRLLLTNLWS). An N-linked (GlcNAc...) asparagine glycan is attached at N43. The chain crosses the membrane as a helical span at residues 65–84 (LSVAIFSVGGMIGSFSVGLF). The Cytoplasmic portion of the chain corresponds to 85–89 (NRFGR). Residues 90-110 (RNSMLIVNLLAVIGGCLMGFC) traverse the membrane as a helical segment. The Extracellular portion of the chain corresponds to 111–117 (KISESVE). Residues 118 to 141 (MLILGRLVIGVFCGLCTGFVPMYI) traverse the membrane as a helical segment. The Cytoplasmic portion of the chain corresponds to 142–152 (GEISPTALRGA). Residues 153-173 (FGTLNQLGIVIGILVAQIFGL) form a helical membrane-spanning segment. Q158 contacts D-glucose. Topologically, residues 174–182 (EIILGSEVL) are extracellular. Residues 183-203 (WPVLLGFTIIPAILQSAALPF) traverse the membrane as a helical segment. At 204–268 (CPESPRFLLI…LFRAPSYRQP (65 aa)) the chain is on the cytoplasmic side. Phosphothreonine is present on T231. A helical membrane pass occupies residues 269–289 (IIISIVLQLSQQLSGINAVFY). Positions 276 to 278 (QLS) are important for selectivity against fructose. D-glucose-binding positions include 279 to 280 (QQ) and N285. At 290–303 (YSTGIFKDAGVKEP) the chain is on the extracellular side. The chain crosses the membrane as a helical span at residues 304-324 (IYATIGAGVVNTIFTIVSVFL). A D-glucose-binding site is contributed by N314. The Cytoplasmic portion of the chain corresponds to 325 to 330 (VERAGR). The helical transmembrane segment at 331-351 (RTLHLIGLGGMALCSVLMTVS) threads the bilayer. The Extracellular segment spans residues 352-362 (LLLKDKYDTMS). A helical membrane pass occupies residues 363-388 (LVCIAAILIYVAFFEIGPGPIPWFIV). 2 residues coordinate D-glucose: E377 and W385. Residues 389 to 398 (AELFSQGPRP) lie on the Cytoplasmic side of the membrane. Residues 399-419 (AAMAVAGCSNWTSNFLVGLLF) form a helical membrane-spanning segment. Topologically, residues 420–428 (PSAAYYLGA) are extracellular. A helical membrane pass occupies residues 429-449 (YVFVIFAVFLVAFFIFTFFKV). Over 450–494 (PETRGRTFEDITRAFEGQAAEANKLGKGPTMEMNSIQPIETTTHV) the chain is Cytoplasmic. S484 is modified (phosphoserine). The residue at position 491 (T491) is a Phosphothreonine.

Belongs to the major facilitator superfamily. Sugar transporter (TC 2.A.1.1) family. Glucose transporter subfamily. As to quaternary structure, interacts with SMIM43; the interaction may promote SLC2A3-mediated glucose transport to meet the energy needs of mesendoderm differentiation. As to expression, detected in stomach, placenta, lung and brain.

It localises to the cell membrane. It is found in the perikaryon. Its subcellular location is the cell projection. It carries out the reaction D-glucose(out) = D-glucose(in). It catalyses the reaction D-galactose(in) = D-galactose(out). Its activity is regulated as follows. Deoxyglucose transport is inhibited by D-glucose, D-galactose and maltose. Galactose transport is inhibited by D-glucose and maltose. Functionally, facilitative glucose transporter. Can also mediate the uptake of various other monosaccharides across the cell membrane. Mediates the uptake of glucose, 2-deoxyglucose, galactose, mannose, xylose and fucose, and probably also dehydroascorbate. Does not mediate fructose transport. Required for mesendoderm differentiation. This Oryctolagus cuniculus (Rabbit) protein is Solute carrier family 2, facilitated glucose transporter member 3.